An 858-amino-acid polypeptide reads, in one-letter code: Translation initiation factor IF-2 (858 aa).

Residues 49–271 (TTTVTHPKSQ…NKPAPVRKDK (223 aa)) form a disordered region. Residues 80–226 (NQQQSNSRHQ…RFGGSLNSNN (147 aa)) show a composition bias toward low complexity. The span at 239–256 (NRRRNNRNNKSRNNKNQR) shows a compositional bias: basic residues. In terms of domain architecture, tr-type G spans 359–528 (PRAPVVTVMG…LLQSEVLELT (170 aa)). The interval 368–375 (GHVDHGKT) is G1. Residue 368–375 (GHVDHGKT) coordinates GTP. A G2 region spans residues 393 to 397 (GITQA). Residues 414–417 (DTPG) form a G3 region. GTP contacts are provided by residues 414-418 (DTPGH) and 468-471 (NKID). The G4 stretch occupies residues 468–471 (NKID). Positions 504-506 (SAK) are G5.

Belongs to the TRAFAC class translation factor GTPase superfamily. Classic translation factor GTPase family. IF-2 subfamily.

It is found in the cytoplasm. Functionally, one of the essential components for the initiation of protein synthesis. Protects formylmethionyl-tRNA from spontaneous hydrolysis and promotes its binding to the 30S ribosomal subunits. Also involved in the hydrolysis of GTP during the formation of the 70S ribosomal complex. The chain is Translation initiation factor IF-2 from Lactiplantibacillus plantarum (strain ATCC BAA-793 / NCIMB 8826 / WCFS1) (Lactobacillus plantarum).